Here is a 389-residue protein sequence, read N- to C-terminus: Tryptophan synthase beta chain (389 aa).

Position 84 is an N6-(pyridoxal phosphate)lysine (lysine 84).

The protein belongs to the TrpB family. Tetramer of two alpha and two beta chains. Pyridoxal 5'-phosphate serves as cofactor.

It catalyses the reaction (1S,2R)-1-C-(indol-3-yl)glycerol 3-phosphate + L-serine = D-glyceraldehyde 3-phosphate + L-tryptophan + H2O. It functions in the pathway amino-acid biosynthesis; L-tryptophan biosynthesis; L-tryptophan from chorismate: step 5/5. The beta subunit is responsible for the synthesis of L-tryptophan from indole and L-serine. In Methanococcus aeolicus (strain ATCC BAA-1280 / DSM 17508 / OCM 812 / Nankai-3), this protein is Tryptophan synthase beta chain.